A 261-amino-acid polypeptide reads, in one-letter code: ATP synthase subunit a (261 aa).

Transmembrane regions (helical) follow at residues 31 to 51, 64 to 84, 97 to 117, 126 to 146, 166 to 188, 201 to 223, and 235 to 255; these read IAFT…LIFM, WQAA…TNIG, LFMF…VVGV, LTVT…VGFW, IPMI…GLRL, VLAG…VSIP, and ELLV…LYLN.

It belongs to the ATPase A chain family. In terms of assembly, F-type ATPases have 2 components, CF(1) - the catalytic core - and CF(0) - the membrane proton channel. CF(1) has five subunits: alpha(3), beta(3), gamma(1), delta(1), epsilon(1). CF(0) has three main subunits: a(1), b(2) and c(9-12). The alpha and beta chains form an alternating ring which encloses part of the gamma chain. CF(1) is attached to CF(0) by a central stalk formed by the gamma and epsilon chains, while a peripheral stalk is formed by the delta and b chains.

The protein localises to the cell inner membrane. Key component of the proton channel; it plays a direct role in the translocation of protons across the membrane. In Rhizorhabdus wittichii (strain DSM 6014 / CCUG 31198 / JCM 15750 / NBRC 105917 / EY 4224 / RW1) (Sphingomonas wittichii), this protein is ATP synthase subunit a.